A 416-amino-acid chain; its full sequence is Glutamyl-tRNA reductase (416 aa).

Residues 49 to 52 (TCNR), Ser-105, 110 to 112 (EPQ), and Gln-116 contribute to the substrate site. The active-site Nucleophile is Cys-50. 185-190 (GAGETI) contacts NADP(+).

The protein belongs to the glutamyl-tRNA reductase family. As to quaternary structure, homodimer.

It carries out the reaction (S)-4-amino-5-oxopentanoate + tRNA(Glu) + NADP(+) = L-glutamyl-tRNA(Glu) + NADPH + H(+). It participates in porphyrin-containing compound metabolism; protoporphyrin-IX biosynthesis; 5-aminolevulinate from L-glutamyl-tRNA(Glu): step 1/2. Its function is as follows. Catalyzes the NADPH-dependent reduction of glutamyl-tRNA(Glu) to glutamate 1-semialdehyde (GSA). This is Glutamyl-tRNA reductase from Shewanella baltica (strain OS185).